Here is a 538-residue protein sequence, read N- to C-terminus: Cytochrome P450 monooxygenase claO (538 aa).

The next 2 membrane-spanning stretches (helical) occupy residues 7–27 and 222–242; these read IGAF…KLVG and INPS…PILL. C475 contacts heme.

Belongs to the cytochrome P450 family. The cofactor is heme.

It localises to the membrane. It participates in secondary metabolite biosynthesis; terpenoid biosynthesis. In terms of biological role, cytochrome P450 monooxygenase; part of the gene cluster that mediates the biosynthesis of clavilactone A, a meroterpenoid that features a unique benzo-fused ten-membered carbocyclic ring unit with an alpha,beta-epoxy-gamma-lactone moiety, forming an intriguing 10/5/3 tricyclic nested skeleton. Cytochrome P450 monooxygenases claO, claP, claQ, claU, and claW are close orthologs, suggesting that a redundant function or pseudogenes are present in the cla cluster. These monoxygenases are not involved in clavilactone A biosynthesis nor in its modification. ClaR, ClaS and ClaT are sufficient to produce clavilactone A. The biosynthesis begins with the prenyltransferase claS that transfers geranyl pyrophosphate (GPP) to hydroquinone to produces geranylhydroquinone. The cytochrome P450 monooxygenase claR then catalyzes the diradical coupling reaction between the intramolecular hydroquinone and allyl moieties to form the benzo-fused ten-membered carbocyclic ring unit of wigantol. Finally the cytochrome P450 monooxygenase claT exquisitely and stereoselectively assembles the alpha,beta-epoxy-gamma-lactone moiety, producing clavilactone A via arnebinol A. The sequence is that of Cytochrome P450 monooxygenase claO from Ampulloclitocybe clavipes (Club foot).